A 452-amino-acid polypeptide reads, in one-letter code: tRNA modification GTPase MnmE (452 aa).

Positions 21, 78, and 118 each coordinate (6S)-5-formyl-5,6,7,8-tetrahydrofolate. Residues 214-375 (GMKVVIAGRP…LREHLKKSMG (162 aa)) form the TrmE-type G domain. Asn-224 serves as a coordination point for K(+). Residues 224–229 (NAGKSS), 243–249 (TNIAGTT), and 268–271 (DTAG) contribute to the GTP site. Ser-228 is a Mg(2+) binding site. 3 residues coordinate K(+): Thr-243, Ile-245, and Thr-248. Thr-249 is a Mg(2+) binding site. Position 452 (Lys-452) interacts with (6S)-5-formyl-5,6,7,8-tetrahydrofolate.

The protein belongs to the TRAFAC class TrmE-Era-EngA-EngB-Septin-like GTPase superfamily. TrmE GTPase family. In terms of assembly, homodimer. Heterotetramer of two MnmE and two MnmG subunits. The cofactor is K(+).

The protein resides in the cytoplasm. Exhibits a very high intrinsic GTPase hydrolysis rate. Involved in the addition of a carboxymethylaminomethyl (cmnm) group at the wobble position (U34) of certain tRNAs, forming tRNA-cmnm(5)s(2)U34. This chain is tRNA modification GTPase MnmE, found in Actinobacillus pleuropneumoniae serotype 3 (strain JL03).